The primary structure comprises 258 residues: 5-oxoprolinase subunit A 2 (258 aa).

The protein belongs to the LamB/PxpA family. As to quaternary structure, forms a complex composed of PxpA, PxpB and PxpC.

The enzyme catalyses 5-oxo-L-proline + ATP + 2 H2O = L-glutamate + ADP + phosphate + H(+). Its function is as follows. Catalyzes the cleavage of 5-oxoproline to form L-glutamate coupled to the hydrolysis of ATP to ADP and inorganic phosphate. The chain is 5-oxoprolinase subunit A 2 from Pseudomonas putida (strain ATCC 47054 / DSM 6125 / CFBP 8728 / NCIMB 11950 / KT2440).